Reading from the N-terminus, the 449-residue chain is Maltose-6'-phosphate glucosidase (449 aa).

Residue 6–72 (FSIVIAGGGS…PDIEFAATTD (67 aa)) coordinates NAD(+). R95 and N149 together coordinate substrate. C171 is a Mn(2+) binding site. D172 serves as the catalytic Proton donor. Mn(2+) is bound at residue H202. Y265 functions as the Proton acceptor in the catalytic mechanism. R285 contributes to the substrate binding site.

This sequence belongs to the glycosyl hydrolase 4 family. As to quaternary structure, homotetramer. It depends on Mn(2+) as a cofactor. Fe(2+) is required as a cofactor. Requires Co(2+) as cofactor. Ni(2+) serves as cofactor. The cofactor is NAD(+).

It carries out the reaction alpha-maltose 6'-phosphate + H2O = D-glucose 6-phosphate + D-glucose. With respect to regulation, cellobiose-6'-phosphate and 6-phospho-beta-D-glucopyranoside are not substrates but competitive inhibitors of GlvA. Hydrolyzes maltose-6'-phosphate and trehalose-6'-phosphate. Is involved in the catabolism of alpha-glycosides accumulated via a phosphoenolpyruvate-dependent maltose phosphotransferase system (PEP-PTS). Is also able to significantly catalyze the hydrolysis of both 6-phospho-alpha- and 6-phospho-beta-glucosides containing activated leaving groups such as p-nitrophenol and does so with retention and inversion, respectively, of the substrate anomeric configuration. This is Maltose-6'-phosphate glucosidase (glvA) from Bacillus subtilis (strain 168).